The primary structure comprises 713 residues: MFNTHKVEIEWGGRPLTLETGKIARQADGAVLATYGETVVLATVVSAKEPKPGQDFFPLTVNYQEKTYAAGKIPGGYFKREGRPSENETLVSRLIDRPIRPLFVEGYKNDTQVVLTVVQHDLENNPDVLSMVAASAALTISGVPFMGPIGGARVGYINGEYVLNPNIDEMPESKLDLVVAGTADAVLMVESEAQELSEEVMLGAVVFGQKGFQPVIDAIIKLAEVAAKEPRDFQPEDLSDLEAKMLAVVENDLRDAYKITEKQARYVAVDAAKAKAKAHFFPEGVEEPEFSAEKFATVFKHLQAKIVRWNILDTGSRIDGRDLKTVRAIVSEVGLLPRTHGSALFTRGETQAIVVATLGTGEDEQMIDALTGTYKESFMLHYNFPPYSVGETGRMGSPGRREVGHGKLAWRAIHPMLPAADQFPYTIRSVSEITESNGSSSMATVCGTSLALMDAGVPLARPVAGIAMGLIKEGERFAVLSDILGDEDHLGDMDFKVAGTDNGITALQMDIKIDGITEEIMKVALEQAKGGRVHILGEMAKALSTSREELGEFAPRIEVMNIPTDKIRDVIGSGGKVIREIVEKTGAKINIEDDGTVKIASSNGKEIEAAKKWIHSIVAEPEVGEIYEGTVVKTADFGAFVNFFGPRDGLVHISQLASDRVAKTTDVVKEGQKVWVKLMGFDERGKVRLSMKVVDQETGKEVVAEKKAEADAE.

Aspartate 488 and aspartate 494 together coordinate Mg(2+). A KH domain is found at 555 to 614 (PRIEVMNIPTDKIRDVIGSGGKVIREIVEKTGAKINIEDDGTVKIASSNGKEIEAAKKWI). One can recognise an S1 motif domain in the interval 624–692 (GEIYEGTVVK…ERGKVRLSMK (69 aa)).

This sequence belongs to the polyribonucleotide nucleotidyltransferase family. Mg(2+) is required as a cofactor.

The protein localises to the cytoplasm. The enzyme catalyses RNA(n+1) + phosphate = RNA(n) + a ribonucleoside 5'-diphosphate. Functionally, involved in mRNA degradation. Catalyzes the phosphorolysis of single-stranded polyribonucleotides processively in the 3'- to 5'-direction. The protein is Polyribonucleotide nucleotidyltransferase of Brucella anthropi (strain ATCC 49188 / DSM 6882 / CCUG 24695 / JCM 21032 / LMG 3331 / NBRC 15819 / NCTC 12168 / Alc 37) (Ochrobactrum anthropi).